A 284-amino-acid polypeptide reads, in one-letter code: 4-hydroxybenzoate octaprenyltransferase (284 aa).

The next 9 helical transmembrane spans lie at 19 to 39 (IPIL…SHGL), 42 to 62 (ISYL…GCII), 85 to 105 (GQLS…VAFI), 107 to 127 (VLFL…LAIL), 134 to 154 (FFAI…FMAF), 165 to 185 (AWIF…IYAL), 211 to 231 (ILLF…YCDF), 233 to 253 (SFFY…YFLY), and 261 to 281 (CINA…MAVI).

It belongs to the UbiA prenyltransferase family. It depends on Mg(2+) as a cofactor.

It is found in the cell inner membrane. The enzyme catalyses all-trans-octaprenyl diphosphate + 4-hydroxybenzoate = 4-hydroxy-3-(all-trans-octaprenyl)benzoate + diphosphate. It participates in cofactor biosynthesis; ubiquinone biosynthesis. In terms of biological role, catalyzes the prenylation of para-hydroxybenzoate (PHB) with an all-trans polyprenyl group. Mediates the second step in the final reaction sequence of ubiquinone-8 (UQ-8) biosynthesis, which is the condensation of the polyisoprenoid side chain with PHB, generating the first membrane-bound Q intermediate 3-octaprenyl-4-hydroxybenzoate. The sequence is that of 4-hydroxybenzoate octaprenyltransferase from Francisella tularensis subsp. novicida (strain U112).